Consider the following 864-residue polypeptide: DNA mismatch repair protein MutS (864 aa).

613–620 (GPNMGGKS) contributes to the ATP binding site.

This sequence belongs to the DNA mismatch repair MutS family.

Its function is as follows. This protein is involved in the repair of mismatches in DNA. It is possible that it carries out the mismatch recognition step. This protein has a weak ATPase activity. The chain is DNA mismatch repair protein MutS from Actinobacillus pleuropneumoniae serotype 3 (strain JL03).